The chain runs to 340 residues: Ketol-acid reductoisomerase (NADP(+)) (340 aa).

Residues 1–183 enclose the KARI N-terminal Rossmann domain; the sequence is MAITVYYDKD…GGGRTGIIET (183 aa). NADP(+) is bound by residues 26 to 29, R49, S52, S54, and 84 to 87; these read FGSQ and DEIQ. Residue H109 is part of the active site. NADP(+) is bound at residue G135. Residues 184–329 form the KARI C-terminal knotted domain; it reads TFKAETETDL…RNLRAMMPWI (146 aa). The Mg(2+) site is built by D192, E196, E228, and E232. Position 253 (S253) interacts with substrate.

The protein belongs to the ketol-acid reductoisomerase family. Requires Mg(2+) as cofactor.

The catalysed reaction is (2R)-2,3-dihydroxy-3-methylbutanoate + NADP(+) = (2S)-2-acetolactate + NADPH + H(+). It catalyses the reaction (2R,3R)-2,3-dihydroxy-3-methylpentanoate + NADP(+) = (S)-2-ethyl-2-hydroxy-3-oxobutanoate + NADPH + H(+). It functions in the pathway amino-acid biosynthesis; L-isoleucine biosynthesis; L-isoleucine from 2-oxobutanoate: step 2/4. Its pathway is amino-acid biosynthesis; L-valine biosynthesis; L-valine from pyruvate: step 2/4. Involved in the biosynthesis of branched-chain amino acids (BCAA). Catalyzes an alkyl-migration followed by a ketol-acid reduction of (S)-2-acetolactate (S2AL) to yield (R)-2,3-dihydroxy-isovalerate. In the isomerase reaction, S2AL is rearranged via a Mg-dependent methyl migration to produce 3-hydroxy-3-methyl-2-ketobutyrate (HMKB). In the reductase reaction, this 2-ketoacid undergoes a metal-dependent reduction by NADPH to yield (R)-2,3-dihydroxy-isovalerate. The polypeptide is Ketol-acid reductoisomerase (NADP(+)) (Campylobacter jejuni (strain RM1221)).